Reading from the N-terminus, the 213-residue chain is ATP-dependent Clp protease proteolytic subunit (213 aa).

The active-site Nucleophile is S114. Residue H139 is part of the active site.

This sequence belongs to the peptidase S14 family. Fourteen ClpP subunits assemble into 2 heptameric rings which stack back to back to give a disk-like structure with a central cavity, resembling the structure of eukaryotic proteasomes.

It localises to the cytoplasm. It carries out the reaction Hydrolysis of proteins to small peptides in the presence of ATP and magnesium. alpha-casein is the usual test substrate. In the absence of ATP, only oligopeptides shorter than five residues are hydrolyzed (such as succinyl-Leu-Tyr-|-NHMec, and Leu-Tyr-Leu-|-Tyr-Trp, in which cleavage of the -Tyr-|-Leu- and -Tyr-|-Trp bonds also occurs).. Cleaves peptides in various proteins in a process that requires ATP hydrolysis. Has a chymotrypsin-like activity. Plays a major role in the degradation of misfolded proteins. This is ATP-dependent Clp protease proteolytic subunit from Pseudomonas syringae pv. syringae (strain B728a).